Reading from the N-terminus, the 423-residue chain is UDP-N-acetylglucosamine 1-carboxyvinyltransferase 1 (423 aa).

A phosphoenolpyruvate-binding site is contributed by 23–24 (KN). R96 is a UDP-N-acetyl-alpha-D-glucosamine binding site. C120 acts as the Proton donor in catalysis. The residue at position 120 (C120) is a 2-(S-cysteinyl)pyruvic acid O-phosphothioketal. UDP-N-acetyl-alpha-D-glucosamine contacts are provided by residues 125–129 (RPIDL), D309, and V331.

Belongs to the EPSP synthase family. MurA subfamily.

Its subcellular location is the cytoplasm. It catalyses the reaction phosphoenolpyruvate + UDP-N-acetyl-alpha-D-glucosamine = UDP-N-acetyl-3-O-(1-carboxyvinyl)-alpha-D-glucosamine + phosphate. It functions in the pathway cell wall biogenesis; peptidoglycan biosynthesis. In terms of biological role, cell wall formation. Adds enolpyruvyl to UDP-N-acetylglucosamine. The protein is UDP-N-acetylglucosamine 1-carboxyvinyltransferase 1 of Streptococcus thermophilus (strain CNRZ 1066).